Here is a 498-residue protein sequence, read N- to C-terminus: Cytochrome P450 monooxygenase 110 (498 aa).

Residues 7–24 form a helical membrane-spanning segment; that stretch reads YVFALLGILATLYFVRWS. Asparagine 425 carries N-linked (GlcNAc...) asparagine glycosylation. Cysteine 440 provides a ligand contact to heme.

Belongs to the cytochrome P450 family. The cofactor is heme.

The protein localises to the membrane. It participates in secondary metabolite biosynthesis. Its function is as follows. Cytochrome P450 monooxygenase that is able to use dehydroabietic acid and testosterone as substrates for oxidation, suggesting that the natural substrate(s) may be structurally related to steroid compounds. This chain is Cytochrome P450 monooxygenase 110, found in Postia placenta (strain ATCC 44394 / Madison 698-R) (Brown rot fungus).